Reading from the N-terminus, the 462-residue chain is Nitrate/nitrite transporter NarU (462 aa).

The Cytoplasmic portion of the chain corresponds to M1 to N35. The chain crosses the membrane as a helical span at residues L36 to V56. Topologically, residues T57–T76 are periplasmic. Residues A77–F97 form a helical membrane-spanning segment. The Cytoplasmic portion of the chain corresponds to G98 to R101. A helical transmembrane segment spans residues W102–Q122. Residues N123–N125 are Periplasmic-facing. The helical transmembrane segment at T126–A146 threads the bilayer. Over S147–Q180 the chain is Cytoplasmic. A helical transmembrane segment spans residues L181 to P201. Residues Q202–S206 are Periplasmic-facing. A helical membrane pass occupies residues V207–A227. At A228–S258 the chain is on the cytoplasmic side. Residues L259–A279 traverse the membrane as a helical segment. Residues K280 to N287 are Periplasmic-facing. A helical membrane pass occupies residues I288–A308. Residues I309 to R317 lie on the Cytoplasmic side of the membrane. A helical transmembrane segment spans residues V318 to P338. At G339–N344 the chain is on the periplasmic side. A helical transmembrane segment spans residues F345–S365. Residues T366 to A401 are Cytoplasmic-facing. Residues A402–F422 form a helical membrane-spanning segment. Residues G423 to P432 are Periplasmic-facing. A helical membrane pass occupies residues V433 to V453. Residues Y454–K462 lie on the Cytoplasmic side of the membrane.

The protein belongs to the major facilitator superfamily. Nitrate/nitrite porter (TC 2.A.1.8) family.

It localises to the cell inner membrane. Its function is as follows. Catalyzes nitrate uptake, nitrite uptake and nitrite export across the cytoplasmic membrane. May function as a nitrate/H(+) and nitrite/H(+) channel. Could confer a selective advantage during severe nutrient starvation or slow growth. This is Nitrate/nitrite transporter NarU (narU) from Escherichia coli (strain K12).